The sequence spans 421 residues: ATP phosphoribosyltransferase regulatory subunit (421 aa).

Belongs to the class-II aminoacyl-tRNA synthetase family. HisZ subfamily. In terms of assembly, heteromultimer composed of HisG and HisZ subunits.

It localises to the cytoplasm. The protein operates within amino-acid biosynthesis; L-histidine biosynthesis; L-histidine from 5-phospho-alpha-D-ribose 1-diphosphate: step 1/9. Its function is as follows. Required for the first step of histidine biosynthesis. May allow the feedback regulation of ATP phosphoribosyltransferase activity by histidine. This Clostridium novyi (strain NT) protein is ATP phosphoribosyltransferase regulatory subunit.